The chain runs to 907 residues: Gamma-tubulin complex component 3 (907 aa).

The residue at position 2 (Ala-2) is an N-acetylalanine. At Ser-113 the chain carries Phosphoserine. Polar residues predominate over residues 210-230; sequence NQPSSQATTSKGVPSAVSRNM. A disordered region spans residues 210 to 241; that stretch reads NQPSSQATTSKGVPSAVSRNMTRSRREGDTGG.

This sequence belongs to the TUBGCP family. In terms of assembly, component of the gamma-tubulin ring complex (gTuRC) consisting of TUBGCP2, TUBGCP3, TUBGCP4, TUBGCP5 and TUBGCP6 and gamma-tubulin TUBG1 or TUBG2. TUBGCP2, TUBGCP3, TUBGCP4, TUBGCP5 and TUBGCP6 assemble in a 5:5:2:1:1 stoichiometry; each is associated with a gamma-tubulin, thereby arranging 14 gamma-tubulins in a helical manner. Gamma-tubulin at the first position is blocked by TUBGCP3 at the last position, allowing 13 protafilaments to grow into a microtubule. The gTuRC (via TUBGCP3 and TUBGCP6) interacts with ACTB and MZT1; the interactions form a luminal bridge that stabilizes the initial structure during complex assembly. The gTuRC (via TUBGCP2) interacts with MZT2A/MZT2B and CDK5RAP2 (via CM1 motif); the interactions play a role in gTuRC activation. Interacts with NIN (via N-terminus); the interaction may promote recruitment of the gamma-tubulin ring complex to the centrosome. In terms of tissue distribution, ubiquitously expressed.

Its subcellular location is the cytoplasm. It localises to the cytoskeleton. The protein resides in the microtubule organizing center. It is found in the centrosome. Its function is as follows. Component of the gamma-tubulin ring complex (gTuRC) which mediates microtubule nucleation. The gTuRC regulates the minus-end nucleation of alpha-beta tubulin heterodimers that grow into microtubule protafilaments, a critical step in centrosome duplication and spindle formation. In Homo sapiens (Human), this protein is Gamma-tubulin complex component 3 (TUBGCP3).